The following is a 1706-amino-acid chain: Brefeldin A-inhibited guanine nucleotide-exchange protein 4 (1706 aa).

An SEC7 domain is found at 555–742 (MLEQRRAYKI…GSLYDRVVKE (188 aa)). Residue E657 is part of the active site.

In terms of assembly, homodimer.

It localises to the cytoplasm. The protein localises to the cytosol. Its subcellular location is the membrane. With respect to regulation, inhibited by brefeldin A. In terms of biological role, activates the ARF proteins by exchanging bound GDP for free GTP. Plays a role in vesicular protein sorting. The protein is Brefeldin A-inhibited guanine nucleotide-exchange protein 4 (BIG4) of Arabidopsis thaliana (Mouse-ear cress).